Here is a 662-residue protein sequence, read N- to C-terminus: DNA topoisomerase 4 subunit B (662 aa).

Residues tyrosine 20, asparagine 60, aspartate 87, 129 to 135 (GLHGVGI), and lysine 359 contribute to the ATP site. One can recognise a Toprim domain in the interval 439-553 (TELFIVEGDS…EGHLYLAKPP (115 aa)). Positions 445, 518, and 520 each coordinate Mg(2+).

It belongs to the type II topoisomerase family. ParE type 1 subfamily. As to quaternary structure, heterotetramer composed of ParC and ParE. It depends on Mg(2+) as a cofactor. Mn(2+) is required as a cofactor. Requires Ca(2+) as cofactor.

The enzyme catalyses ATP-dependent breakage, passage and rejoining of double-stranded DNA.. Its function is as follows. Topoisomerase IV is essential for chromosome segregation. It relaxes supercoiled DNA. Performs the decatenation events required during the replication of a circular DNA molecule. The chain is DNA topoisomerase 4 subunit B from Rickettsia felis (strain ATCC VR-1525 / URRWXCal2) (Rickettsia azadi).